A 117-amino-acid polypeptide reads, in one-letter code: Glycine cleavage system H-like protein (117 aa).

One can recognise a Lipoyl-binding domain in the interval Ile-21 to Gln-103. Lys-62 is subject to N6-lipoyllysine.

The protein belongs to the GcvH family. (R)-lipoate is required as a cofactor.

The protein is Glycine cleavage system H-like protein of Chlamydia trachomatis serovar D (strain ATCC VR-885 / DSM 19411 / UW-3/Cx).